The following is a 921-amino-acid chain: Isoleucine--tRNA ligase (921 aa).

The 'HIGH' region signature appears at 59–69 (PYANGHLHIGH). E569 lines the L-isoleucyl-5'-AMP pocket. Positions 610-614 (KMSKS) match the 'KMSKS' region motif. An ATP-binding site is contributed by K613. Zn(2+)-binding residues include C894, C897, C909, and C912.

This sequence belongs to the class-I aminoacyl-tRNA synthetase family. IleS type 1 subfamily. As to quaternary structure, monomer. It depends on Zn(2+) as a cofactor.

The protein localises to the cytoplasm. It carries out the reaction tRNA(Ile) + L-isoleucine + ATP = L-isoleucyl-tRNA(Ile) + AMP + diphosphate. In terms of biological role, catalyzes the attachment of isoleucine to tRNA(Ile). As IleRS can inadvertently accommodate and process structurally similar amino acids such as valine, to avoid such errors it has two additional distinct tRNA(Ile)-dependent editing activities. One activity is designated as 'pretransfer' editing and involves the hydrolysis of activated Val-AMP. The other activity is designated 'posttransfer' editing and involves deacylation of mischarged Val-tRNA(Ile). The chain is Isoleucine--tRNA ligase from Campylobacter lari (strain RM2100 / D67 / ATCC BAA-1060).